The primary structure comprises 223 residues: Nicotinamide/nicotinic acid mononucleotide adenylyltransferase 2 (223 aa).

2 residues coordinate NAD(+): Ser-11 and Phe-12. His-19 contributes to the ATP binding site. NAD(+)-binding residues include Trp-87, Thr-90, Gly-116, Asp-118, Leu-133, Trp-134, and Arg-153. 190–191 serves as a coordination point for ATP; it reads TR.

This sequence belongs to the eukaryotic NMN adenylyltransferase family. Requires a divalent metal cation as cofactor.

The catalysed reaction is beta-nicotinamide D-ribonucleotide + ATP + H(+) = diphosphate + NAD(+). It catalyses the reaction nicotinate beta-D-ribonucleotide + ATP + H(+) = deamido-NAD(+) + diphosphate. It participates in cofactor biosynthesis; NAD(+) biosynthesis; deamido-NAD(+) from nicotinate D-ribonucleotide: step 1/1. The protein operates within cofactor biosynthesis; NAD(+) biosynthesis; NAD(+) from nicotinamide D-ribonucleotide: step 1/1. In terms of biological role, catalyzes the formation of NAD(+) from nicotinamide mononucleotide (NMN) and ATP. Can also use the deamidated form; nicotinic acid mononucleotide (NaMN) as substrate. This Caenorhabditis elegans protein is Nicotinamide/nicotinic acid mononucleotide adenylyltransferase 2.